Here is a 77-residue protein sequence, read N- to C-terminus: Acyl carrier protein homolog (77 aa).

The region spanning 1-76 (MSINIKDLIM…DLINAFEDVL (76 aa)) is the Carrier domain. Ser-36 bears the O-(pantetheine 4'-phosphoryl)serine mark.

In terms of processing, 4'-phosphopantetheine is transferred from CoA to a specific serine of the apo-ACP-like protein.

It participates in lipid metabolism; fatty acid biosynthesis. Functionally, carrier of the growing fatty acid chain in fatty acid biosynthesis. The chain is Acyl carrier protein homolog from Ureaplasma parvum serovar 3 (strain ATCC 700970).